Consider the following 35-residue polypeptide: Defensin-B (35 aa).

Cystine bridges form between Cys-4-Cys-25, Cys-10-Cys-33, and Cys-14-Cys-35.

The protein localises to the secreted. In terms of biological role, has antibacterial activity against M.luteus and E.coli. This is Defensin-B from Mytilus edulis (Blue mussel).